A 255-amino-acid chain; its full sequence is Taurine import ATP-binding protein TauB (255 aa).

In terms of domain architecture, ABC transporter spans 2-229 (LQISHLYADY…RFVAGESSRS (228 aa)). 34–41 (GPSGCGKT) is a binding site for ATP.

Belongs to the ABC transporter superfamily. Taurine importer (TC 3.A.1.17.1) family. The complex is composed of two ATP-binding proteins (TauB), two transmembrane proteins (TauC) and a solute-binding protein (TauA).

It localises to the cell inner membrane. The catalysed reaction is taurine(out) + ATP + H2O = taurine(in) + ADP + phosphate + H(+). Its function is as follows. Part of the ABC transporter complex TauABC involved in taurine import. Responsible for energy coupling to the transport system. The sequence is that of Taurine import ATP-binding protein TauB from Escherichia coli O6:H1 (strain CFT073 / ATCC 700928 / UPEC).